The sequence spans 503 residues: 4-trimethylaminobutyraldehyde dehydrogenase (503 aa).

NAD(+)-binding positions include K189 and 241–245 (GSVPT). E263 functions as the Proton acceptor in the catalytic mechanism. C297 functions as the Nucleophile in the catalytic mechanism. Residue E400 participates in NAD(+) binding.

It belongs to the aldehyde dehydrogenase family. Homotetramer.

The protein resides in the cytoplasm. The protein localises to the cytosol. The enzyme catalyses 4-(trimethylamino)butanal + NAD(+) + H2O = 4-(trimethylamino)butanoate + NADH + 2 H(+). It carries out the reaction an aldehyde + NAD(+) + H2O = a carboxylate + NADH + 2 H(+). Its pathway is amine and polyamine biosynthesis; carnitine biosynthesis. Its function is as follows. Converts gamma-trimethylaminobutyraldehyde into gamma-butyrobetaine with high efficiency (in vitro). Can catalyze the irreversible oxidation of a broad range of aldehydes to the corresponding acids in an NAD-dependent reaction, but with low efficiency. The chain is 4-trimethylaminobutyraldehyde dehydrogenase (aldh9A1) from Gadus morhua subsp. callarias (Baltic cod).